Here is a 632-residue protein sequence, read N- to C-terminus: Probable extracellular metalloproteinase 2 (632 aa).

Residues 1–19 (MHGLLLAGLAAALPLGVAG) form the signal peptide. The propeptide occupies 20–244 (LPARQQSGLS…VHNVVDYVAS (225 aa)). N-linked (GlcNAc...) asparagine glycans are attached at residues N81 and N270. Residue H429 coordinates Zn(2+). Residue E430 is part of the active site. H433 is a binding site for Zn(2+).

It belongs to the peptidase M36 family. Requires Zn(2+) as cofactor.

The protein resides in the secreted. Functionally, secreted metalloproteinase probably acting as a virulence factor. The protein is Probable extracellular metalloproteinase 2 (MEP2) of Arthroderma benhamiae (strain ATCC MYA-4681 / CBS 112371) (Trichophyton mentagrophytes).